The chain runs to 449 residues: Glutathione reductase (449 aa).

FAD-binding residues include Ser15, Gly16, Glu35, Thr42, Cys43, and Lys51. Ser15 provides a ligand contact to glutathione. Cys43 and Cys48 are disulfide-bonded. Position 99 (Tyr99) interacts with glutathione. Ala115 provides a ligand contact to FAD. Residues Gly175, Ile178, Glu181, Arg198, Arg204, and Gly261 each contribute to the NADP(+) site. FAD contacts are provided by Asp302 and Thr310. Position 340 (Ala340) interacts with NADP(+). Residue His435 coordinates FAD. Catalysis depends on His435, which acts as the Proton acceptor.

It belongs to the class-I pyridine nucleotide-disulfide oxidoreductase family. As to quaternary structure, homodimer. FAD serves as cofactor.

It localises to the cytoplasm. It catalyses the reaction 2 glutathione + NADP(+) = glutathione disulfide + NADPH + H(+). The protein operates within xenobiotic degradation; (2,4,5-trichlorophenoxy)acetate degradation. In terms of biological role, catalyzes the reduction of glutathione disulfide (GSSG) to reduced glutathione (GSH). Constitutes the major mechanism to maintain a high GSH:GSSG ratio in the cytosol. The polypeptide is Glutathione reductase (gor) (Burkholderia cepacia (Pseudomonas cepacia)).